The sequence spans 437 residues: 3-ketoacyl-CoA thiolase (437 aa).

Catalysis depends on cysteine 99, which acts as the Acyl-thioester intermediate. Residues histidine 392 and cysteine 422 each act as proton acceptor in the active site.

Belongs to the thiolase-like superfamily. Thiolase family. In terms of assembly, heterotetramer of two alpha chains (FadJ) and two beta chains (FadI).

It is found in the cytoplasm. It carries out the reaction an acyl-CoA + acetyl-CoA = a 3-oxoacyl-CoA + CoA. The protein operates within lipid metabolism; fatty acid beta-oxidation. Its function is as follows. Catalyzes the final step of fatty acid oxidation in which acetyl-CoA is released and the CoA ester of a fatty acid two carbons shorter is formed. This chain is 3-ketoacyl-CoA thiolase, found in Pectobacterium atrosepticum (strain SCRI 1043 / ATCC BAA-672) (Erwinia carotovora subsp. atroseptica).